Consider the following 230-residue polypeptide: Orotate phosphoribosyltransferase (230 aa).

Residues arginine 107, lysine 108, lysine 111, histidine 113, and 133–141 each bind 5-phospho-alpha-D-ribose 1-diphosphate; that span reads EDLTTAGGS. Position 137 (threonine 137) interacts with orotate.

Belongs to the purine/pyrimidine phosphoribosyltransferase family. PyrE subfamily. As to quaternary structure, homodimer. Mg(2+) is required as a cofactor.

It carries out the reaction orotidine 5'-phosphate + diphosphate = orotate + 5-phospho-alpha-D-ribose 1-diphosphate. The protein operates within pyrimidine metabolism; UMP biosynthesis via de novo pathway; UMP from orotate: step 1/2. Its function is as follows. Catalyzes the transfer of a ribosyl phosphate group from 5-phosphoribose 1-diphosphate to orotate, leading to the formation of orotidine monophosphate (OMP). The chain is Orotate phosphoribosyltransferase from Allorhizobium ampelinum (strain ATCC BAA-846 / DSM 112012 / S4) (Agrobacterium vitis (strain S4)).